A 211-amino-acid chain; its full sequence is Orotidine 5'-phosphate decarboxylase (211 aa).

Substrate contacts are provided by residues aspartate 7, lysine 29, 57–66, serine 109, 162–172, glycine 185, and arginine 186; these read DLKLADIPNT and PGIGAQGGSPV. Catalysis depends on lysine 59, which acts as the Proton donor.

It belongs to the OMP decarboxylase family. Type 1 subfamily. Homodimer.

The enzyme catalyses orotidine 5'-phosphate + H(+) = UMP + CO2. The protein operates within pyrimidine metabolism; UMP biosynthesis via de novo pathway; UMP from orotate: step 2/2. Catalyzes the decarboxylation of orotidine 5'-monophosphate (OMP) to uridine 5'-monophosphate (UMP). This Pyrococcus furiosus (strain ATCC 43587 / DSM 3638 / JCM 8422 / Vc1) protein is Orotidine 5'-phosphate decarboxylase.